The following is a 159-amino-acid chain: 2-C-methyl-D-erythritol 2,4-cyclodiphosphate synthase (159 aa).

A divalent metal cation contacts are provided by D8 and H10. 4-CDP-2-C-methyl-D-erythritol 2-phosphate-binding positions include D8–H10 and H34–S35. H42 serves as a coordination point for a divalent metal cation. 4-CDP-2-C-methyl-D-erythritol 2-phosphate contacts are provided by residues D56–G58, F61–D65, A100–A106, T132–E135, F139, and R142.

This sequence belongs to the IspF family. Homotrimer. A divalent metal cation serves as cofactor.

The enzyme catalyses 4-CDP-2-C-methyl-D-erythritol 2-phosphate = 2-C-methyl-D-erythritol 2,4-cyclic diphosphate + CMP. It participates in isoprenoid biosynthesis; isopentenyl diphosphate biosynthesis via DXP pathway; isopentenyl diphosphate from 1-deoxy-D-xylulose 5-phosphate: step 4/6. In terms of biological role, involved in the biosynthesis of isopentenyl diphosphate (IPP) and dimethylallyl diphosphate (DMAPP), two major building blocks of isoprenoid compounds. Catalyzes the conversion of 4-diphosphocytidyl-2-C-methyl-D-erythritol 2-phosphate (CDP-ME2P) to 2-C-methyl-D-erythritol 2,4-cyclodiphosphate (ME-CPP) with a corresponding release of cytidine 5-monophosphate (CMP). The polypeptide is 2-C-methyl-D-erythritol 2,4-cyclodiphosphate synthase (Aliivibrio salmonicida (strain LFI1238) (Vibrio salmonicida (strain LFI1238))).